The sequence spans 273 residues: Putative esterase/lipase 3 (273 aa).

His-34 is a catalytic residue. The active-site Charge relay system is the Ser-100.

This sequence belongs to the lipase/esterase LIP3/BchO family.

This chain is Putative esterase/lipase 3, found in Mycoplasma genitalium (strain ATCC 33530 / DSM 19775 / NCTC 10195 / G37) (Mycoplasmoides genitalium).